Reading from the N-terminus, the 315-residue chain is Ornithine carbamoyltransferase (315 aa).

Carbamoyl phosphate contacts are provided by residues 57 to 60 (STRT), glutamine 84, arginine 108, and 135 to 138 (HPCQ). Residues asparagine 166, aspartate 230, and 234–235 (SM) contribute to the L-ornithine site. Carbamoyl phosphate-binding positions include 270–271 (CL) and arginine 298.

Belongs to the aspartate/ornithine carbamoyltransferase superfamily. OTCase family.

It localises to the cytoplasm. The catalysed reaction is carbamoyl phosphate + L-ornithine = L-citrulline + phosphate + H(+). It participates in amino-acid biosynthesis; L-arginine biosynthesis; L-arginine from L-ornithine and carbamoyl phosphate: step 1/3. In terms of biological role, reversibly catalyzes the transfer of the carbamoyl group from carbamoyl phosphate (CP) to the N(epsilon) atom of ornithine (ORN) to produce L-citrulline. The protein is Ornithine carbamoyltransferase of Thermococcus kodakarensis (strain ATCC BAA-918 / JCM 12380 / KOD1) (Pyrococcus kodakaraensis (strain KOD1)).